The following is a 398-amino-acid chain: Stomatin-like protein 1 (398 aa).

The Tyrosine-type lysosomal sorting signal motif lies at 6–10; that stretch reads GYRAL. Serine 28 carries the post-translational modification Phosphoserine. The helical; Signal-anchor for type III membrane protein transmembrane segment at 58-78 threads the bilayer; that stretch reads LISFLGFLLLLVTFPISGWFA. Residues 79-398 lie on the Cytoplasmic side of the membrane; sequence LKIVPTYERM…KLEAVLRALK (320 aa). The region spanning 287–398 is the SCP2 domain; it reads KQPLAEGLLT…KLEAVLRALK (112 aa).

This sequence belongs to the band 7/mec-2 family. As to quaternary structure, interacts with STOM; may redistribute STOM from the plasma membrane to late endosomes. Interacts with FBXW7 isoform 3 and CDK2. Ubiquitously expressed at low levels. Expression is highest in brain.

It localises to the membrane. It is found in the late endosome membrane. Its subcellular location is the membrane raft. The protein resides in the cell membrane. The protein localises to the cytoplasmic vesicle. Its function is as follows. May play a role in cholesterol transfer to late endosomes. May play a role in modulating membrane acid-sensing ion channels. Can specifically inhibit proton-gated current of ASIC1 isoform 1. Can increase inactivation speed of ASIC3. May be involved in regulation of proton sensing in dorsal root ganglions. May play a role in protecting FBXW7 isoform 3 from degradation. The polypeptide is Stomatin-like protein 1 (STOML1) (Homo sapiens (Human)).